Consider the following 123-residue polypeptide: Small ribosomal subunit protein uS12 (123 aa).

The residue at position 89 (Asp-89) is a 3-methylthioaspartic acid.

Belongs to the universal ribosomal protein uS12 family. Part of the 30S ribosomal subunit. Contacts proteins S8 and S17. May interact with IF1 in the 30S initiation complex.

With S4 and S5 plays an important role in translational accuracy. Functionally, interacts with and stabilizes bases of the 16S rRNA that are involved in tRNA selection in the A site and with the mRNA backbone. Located at the interface of the 30S and 50S subunits, it traverses the body of the 30S subunit contacting proteins on the other side and probably holding the rRNA structure together. The combined cluster of proteins S8, S12 and S17 appears to hold together the shoulder and platform of the 30S subunit. This chain is Small ribosomal subunit protein uS12, found in Methylobacterium radiotolerans (strain ATCC 27329 / DSM 1819 / JCM 2831 / NBRC 15690 / NCIMB 10815 / 0-1).